The following is a 126-amino-acid chain: Glycine cleavage system H protein (126 aa).

The Lipoyl-binding domain occupies 21–103 (TVTVGISDHA…YESGWIARIK (83 aa)). At Lys-62 the chain carries N6-lipoyllysine.

It belongs to the GcvH family. The glycine cleavage system is composed of four proteins: P, T, L and H. The cofactor is (R)-lipoate.

In terms of biological role, the glycine cleavage system catalyzes the degradation of glycine. The H protein shuttles the methylamine group of glycine from the P protein to the T protein. This Aliivibrio fischeri (strain ATCC 700601 / ES114) (Vibrio fischeri) protein is Glycine cleavage system H protein.